We begin with the raw amino-acid sequence, 423 residues long: DUF21 domain-containing protein At2g14520 (423 aa).

At 1-11 the chain is on the extracellular side; the sequence is MAVEYECCGTS. One can recognise a CNNM transmembrane domain in the interval 8–191; the sequence is CGTSFFIHIA…GKGGELTHDE (184 aa). The helical transmembrane segment at 12–32 threads the bilayer; the sequence is FFIHIAVIVLLVLFAGLMSGL. Residues 33-70 are Cytoplasmic-facing; sequence TLGLMSMSLVDLEVLAKSGTPRDRIHAAKILPVVKNQH. Residues 71-91 traverse the membrane as a helical segment; that stretch reads LLLCTLLICNAAAMEALPIFL. The Extracellular portion of the chain corresponds to 92–94; it reads DAL. A helical membrane pass occupies residues 95-115; sequence VTAWGAILISVTLILLFGEII. The Cytoplasmic portion of the chain corresponds to 116 to 136; that stretch reads PQSVCSRHGLAIGATVAPFVR. A helical transmembrane segment spans residues 137–157; sequence VLVWICLPVAWPISKLLDFLL. Over 158–423 the chain is Extracellular; it reads GHGRVALFRR…DETDHHFEDL (266 aa). The 62-residue stretch at 210–271 folds into the CBS 1 domain; the sequence is MTPISDTFVI…TINPDEEIQV (62 aa). N-linked (GlcNAc...) asparagine glycans are attached at residues Asn-273 and Asn-322. CBS domains lie at 275–332 and 356–415; these read TIRR…RVDV and PNRA…IFDE.

It is found in the membrane. The protein is DUF21 domain-containing protein At2g14520 (CBSDUF3) of Arabidopsis thaliana (Mouse-ear cress).